A 234-amino-acid chain; its full sequence is Inner membrane protein YbhL (234 aa).

The Periplasmic portion of the chain corresponds to 1–23 (MDRFPRSDSIVQPRAGLQTYMAQ). Residues 24–44 (VYGWMTVGLLLTAFVAWYAAN) traverse the membrane as a helical segment. The Cytoplasmic segment spans residues 45–56 (SAAVMELLFTNR). The helical transmembrane segment at 57–77 (VFLIGLIIAQLALVIVLSAMI) threads the bilayer. Over 78-79 (QK) the chain is Periplasmic. Residues 80–100 (LSAGVTTMLFMLYSALTGLTL) traverse the membrane as a helical segment. The Cytoplasmic segment spans residues 101-102 (SS). The chain crosses the membrane as a helical span at residues 103-123 (IFIVYTAASIASTFVVTAGMF). At 124-136 (GAMSLYGYTTKRD) the chain is on the periplasmic side. A helical transmembrane segment spans residues 137-157 (LSGFGNMLFMALIGIVLASLV). Over 158–163 (NFWLKS) the chain is Cytoplasmic. The helical transmembrane segment at 164–184 (EALMWAVTYIGVIVFVGLTAY) threads the bilayer. The Periplasmic portion of the chain corresponds to 185 to 206 (DTQKLKNMGEQIDTRDTSNLRK). The helical transmembrane segment at 207-227 (YSILGALTLYLDFINLFLMLL) threads the bilayer. At 228-234 (RIFGNRR) the chain is on the cytoplasmic side.

The protein belongs to the BI1 family.

It is found in the cell inner membrane. The protein is Inner membrane protein YbhL (ybhL) of Escherichia coli (strain K12).